Here is a 114-residue protein sequence, read N- to C-terminus: uncharacterized protein (114 aa).

Disordered regions lie at residues 26–45 (GMKQ…DALG) and 72–98 (PKGS…SVQA).

This is an uncharacterized protein from Homo sapiens (Human).